Here is an 841-residue protein sequence, read N- to C-terminus: DNA ligase (841 aa).

Residues 33–37, 82–83, and glutamate 114 each bind NAD(+); these read DAQYD and SL. Lysine 116 (N6-AMP-lysine intermediate) is an active-site residue. Residues arginine 137, glutamate 174, lysine 300, and lysine 324 each contribute to the NAD(+) site. Zn(2+) is bound by residues cysteine 418, cysteine 421, cysteine 436, and cysteine 442. Positions 758 to 841 constitute a BRCT domain; that stretch reads EKTGPLDGQT…AFLGEHGQQR (84 aa).

It belongs to the NAD-dependent DNA ligase family. LigA subfamily. Mg(2+) serves as cofactor. Requires Mn(2+) as cofactor.

The enzyme catalyses NAD(+) + (deoxyribonucleotide)n-3'-hydroxyl + 5'-phospho-(deoxyribonucleotide)m = (deoxyribonucleotide)n+m + AMP + beta-nicotinamide D-nucleotide.. DNA ligase that catalyzes the formation of phosphodiester linkages between 5'-phosphoryl and 3'-hydroxyl groups in double-stranded DNA using NAD as a coenzyme and as the energy source for the reaction. It is essential for DNA replication and repair of damaged DNA. In Xanthomonas oryzae pv. oryzae (strain KACC10331 / KXO85), this protein is DNA ligase.